Here is a 311-residue protein sequence, read N- to C-terminus: tRNA dimethylallyltransferase (311 aa).

8 to 15 is a binding site for ATP; it reads GPTGVGKS. Residue 10–15 participates in substrate binding; sequence TGVGKS.

This sequence belongs to the IPP transferase family. As to quaternary structure, monomer. It depends on Mg(2+) as a cofactor.

It carries out the reaction adenosine(37) in tRNA + dimethylallyl diphosphate = N(6)-dimethylallyladenosine(37) in tRNA + diphosphate. In terms of biological role, catalyzes the transfer of a dimethylallyl group onto the adenine at position 37 in tRNAs that read codons beginning with uridine, leading to the formation of N6-(dimethylallyl)adenosine (i(6)A). This chain is tRNA dimethylallyltransferase, found in Mycobacterium leprae (strain Br4923).